Consider the following 452-residue polypeptide: Probable ECA polymerase (452 aa).

The next 11 helical transmembrane spans lie at 6–26 (FSGL…LTWF), 37–57 (VFFS…TSVL), 63–83 (VGVA…CFYG), 118–138 (VILM…NGFL), 155–175 (GVAL…VYFL), 181–201 (AWLF…MIVG), 207–227 (IIIA…ISLW), 228–248 (MLAA…LKRY), 341–361 (LVVM…GLII), 378–398 (YKAA…IVLA), and 410–430 (VFFL…FWLF).

This sequence belongs to the WzyE family. As to quaternary structure, probably part of a complex composed of WzxE, WzyE and WzzE.

It localises to the cell inner membrane. The protein operates within bacterial outer membrane biogenesis; enterobacterial common antigen biosynthesis. Probably involved in the polymerization of enterobacterial common antigen (ECA) trisaccharide repeat units. The protein is Probable ECA polymerase of Salmonella arizonae (strain ATCC BAA-731 / CDC346-86 / RSK2980).